The primary structure comprises 690 residues: Elongation factor G (690 aa).

Residues 8–282 (EKTRNIGIMA…AVVAYMPSPL (275 aa)) enclose the tr-type G domain. GTP-binding positions include 17–24 (AHIDAGKT), 81–85 (DTPGH), and 135–138 (NKMD).

This sequence belongs to the TRAFAC class translation factor GTPase superfamily. Classic translation factor GTPase family. EF-G/EF-2 subfamily.

The protein resides in the cytoplasm. Functionally, catalyzes the GTP-dependent ribosomal translocation step during translation elongation. During this step, the ribosome changes from the pre-translocational (PRE) to the post-translocational (POST) state as the newly formed A-site-bound peptidyl-tRNA and P-site-bound deacylated tRNA move to the P and E sites, respectively. Catalyzes the coordinated movement of the two tRNA molecules, the mRNA and conformational changes in the ribosome. The chain is Elongation factor G from Alkaliphilus oremlandii (strain OhILAs) (Clostridium oremlandii (strain OhILAs)).